The chain runs to 123 residues: Large ribosomal subunit protein bL12 (123 aa).

It belongs to the bacterial ribosomal protein bL12 family. In terms of assembly, homodimer. Part of the ribosomal stalk of the 50S ribosomal subunit. Forms a multimeric L10(L12)X complex, where L10 forms an elongated spine to which 2 to 4 L12 dimers bind in a sequential fashion. Binds GTP-bound translation factors.

In terms of biological role, forms part of the ribosomal stalk which helps the ribosome interact with GTP-bound translation factors. Is thus essential for accurate translation. The protein is Large ribosomal subunit protein bL12 of Ectopseudomonas mendocina (strain ymp) (Pseudomonas mendocina).